Reading from the N-terminus, the 161-residue chain is Type IV major fimbrial protein FimA (161 aa).

A propeptide spans 1-7 (MKSLQKG) (leader sequence). Phe-8 bears the N-methylphenylalanine mark. Residues 8–28 (FTLIELMIVVAIIGILAAFAI) form a helical membrane-spanning segment. Cys-63 and Cys-105 are oxidised to a cystine.

This sequence belongs to the N-Me-Phe pilin family. The pili are polar flexible filaments of about 5.4 nanometers diameter and 2.5 micrometers average length; they consist of only a single polypeptide chain arranged in a helical configuration of five subunits per turn in the assembled pilus.

Its subcellular location is the fimbrium. It is found in the membrane. Its function is as follows. Major component of the type IV fimbriae that plays an essential role in twitching motility, natural transformation, and protease secretion. In Dichelobacter nodosus (Bacteroides nodosus), this protein is Type IV major fimbrial protein FimA (fimA).